Consider the following 238-residue polypeptide: Proenkephalin-A (238 aa).

A signal peptide spans 1–25 (MAASALSTCLWMLVLGTCVSLVVGT). 3 disulfides stabilise this stretch: C27-C50, C31-C54, and C34-C66. Residues 76–103 (QSPLASQQDQERVDAMMADEEDATSPEH) form a disordered region. Propeptides lie at residues 124 to 167 (SSAS…AEAV), 177 to 195 (ADRG…GRVL), and 206 to 230 (VGRP…SELQ).

This sequence belongs to the opioid neuropeptide precursor family. In terms of tissue distribution, expressed by the venom gland. Moderately expressed in the venom gland transcriptome.

The protein localises to the secreted. In terms of biological role, met-enkephalins compete with and mimic the effects of opiate drugs. They play a role in a number of physiologic functions, including pain perception and responses to stress. Enkephalin peptides found in Meiacanthus fangblennies induce physiological effects via their interaction with delta-type opioid receptors (OPRD1) (tested on M.grammistes). Therefore, finding a proenkephalin sequence in M.atrodorsalis venom suggests that this protein act in the same manner. The sequence is that of Proenkephalin-A from Meiacanthus atrodorsalis (Forktail blenny).